Reading from the N-terminus, the 327-residue chain is ATP-dependent 6-phosphofructokinase (327 aa).

Residue glycine 12 coordinates ATP. ADP-binding positions include 22–26 (RGVVR) and 55–60 (RYSVSD). Residues 73-74 (RF) and 103-106 (GDGS) contribute to the ATP site. Residue aspartate 104 coordinates Mg(2+). 127–129 (TID) serves as a coordination point for substrate. Aspartate 129 functions as the Proton acceptor in the catalytic mechanism. Residue arginine 156 participates in ADP binding. Substrate-binding positions include arginine 164 and 171–173 (MGR). ADP contacts are provided by residues 187–189 (GCE), lysine 213, and 215–217 (KKH). Substrate contacts are provided by residues glutamate 224, arginine 245, and 251–254 (HIQR).

It belongs to the phosphofructokinase type A (PFKA) family. ATP-dependent PFK group I subfamily. Prokaryotic clade 'B1' sub-subfamily. As to quaternary structure, homotetramer. Mg(2+) serves as cofactor.

It is found in the cytoplasm. It catalyses the reaction beta-D-fructose 6-phosphate + ATP = beta-D-fructose 1,6-bisphosphate + ADP + H(+). It participates in carbohydrate degradation; glycolysis; D-glyceraldehyde 3-phosphate and glycerone phosphate from D-glucose: step 3/4. Its activity is regulated as follows. Allosterically activated by ADP and other diphosphonucleosides, and allosterically inhibited by phosphoenolpyruvate. Catalyzes the phosphorylation of D-fructose 6-phosphate to fructose 1,6-bisphosphate by ATP, the first committing step of glycolysis. This Yersinia pseudotuberculosis serotype IB (strain PB1/+) protein is ATP-dependent 6-phosphofructokinase.